The primary structure comprises 349 residues: Phosphoribosylformylglycinamidine cyclo-ligase (349 aa).

The protein belongs to the AIR synthase family.

The protein localises to the cytoplasm. It carries out the reaction 2-formamido-N(1)-(5-O-phospho-beta-D-ribosyl)acetamidine + ATP = 5-amino-1-(5-phospho-beta-D-ribosyl)imidazole + ADP + phosphate + H(+). It participates in purine metabolism; IMP biosynthesis via de novo pathway; 5-amino-1-(5-phospho-D-ribosyl)imidazole from N(2)-formyl-N(1)-(5-phospho-D-ribosyl)glycinamide: step 2/2. In Bordetella pertussis (strain Tohama I / ATCC BAA-589 / NCTC 13251), this protein is Phosphoribosylformylglycinamidine cyclo-ligase.